Here is a 428-residue protein sequence, read N- to C-terminus: Ribosome biogenesis protein WDR12 homolog (428 aa).

The ubiquitin-like (UBL) domain stretch occupies residues L13–E97. 7 WD repeats span residues L109–I146, G148–E190, G197–E236, G259–E297, T299–V338, G344–F384, and G388–K426.

Belongs to the WD repeat WDR12/YTM1 family.

It is found in the nucleus. The protein localises to the nucleolus. Its subcellular location is the nucleoplasm. Required for maturation of ribosomal RNAs and formation of the large ribosomal subunit. The sequence is that of Ribosome biogenesis protein WDR12 homolog from Anopheles gambiae (African malaria mosquito).